Here is a 432-residue protein sequence, read N- to C-terminus: Asparagine--tRNA ligase (432 aa).

It belongs to the class-II aminoacyl-tRNA synthetase family. Homodimer.

It localises to the cytoplasm. It catalyses the reaction tRNA(Asn) + L-asparagine + ATP = L-asparaginyl-tRNA(Asn) + AMP + diphosphate + H(+). The chain is Asparagine--tRNA ligase from Lactobacillus delbrueckii subsp. bulgaricus (strain ATCC 11842 / DSM 20081 / BCRC 10696 / JCM 1002 / NBRC 13953 / NCIMB 11778 / NCTC 12712 / WDCM 00102 / Lb 14).